The chain runs to 322 residues: tRNA dimethylallyltransferase (322 aa).

Residue 12-19 (GPTAAGKT) participates in ATP binding. 14–19 (TAAGKT) contributes to the substrate binding site. 2 interaction with substrate tRNA regions span residues 37-40 (DSAL) and 160-164 (QRLIR).

This sequence belongs to the IPP transferase family. Monomer. It depends on Mg(2+) as a cofactor.

It carries out the reaction adenosine(37) in tRNA + dimethylallyl diphosphate = N(6)-dimethylallyladenosine(37) in tRNA + diphosphate. Functionally, catalyzes the transfer of a dimethylallyl group onto the adenine at position 37 in tRNAs that read codons beginning with uridine, leading to the formation of N6-(dimethylallyl)adenosine (i(6)A). This chain is tRNA dimethylallyltransferase, found in Pseudomonas putida (Arthrobacter siderocapsulatus).